The following is a 294-amino-acid chain: Cytidine deaminase (294 aa).

CMP/dCMP-type deaminase domains lie at 48–168 and 186–294; these read DEDA…FGPK and LTGD…VLLG. Residue 89–91 participates in substrate binding; that stretch reads NME. Histidine 102 contacts Zn(2+). Glutamate 104 functions as the Proton donor in the catalytic mechanism. Cysteine 129 and cysteine 132 together coordinate Zn(2+).

Belongs to the cytidine and deoxycytidylate deaminase family. In terms of assembly, homodimer. It depends on Zn(2+) as a cofactor.

The enzyme catalyses cytidine + H2O + H(+) = uridine + NH4(+). The catalysed reaction is 2'-deoxycytidine + H2O + H(+) = 2'-deoxyuridine + NH4(+). In terms of biological role, this enzyme scavenges exogenous and endogenous cytidine and 2'-deoxycytidine for UMP synthesis. The polypeptide is Cytidine deaminase (Salmonella enteritidis PT4 (strain P125109)).